Reading from the N-terminus, the 468-residue chain is Probable Xaa-Pro aminopeptidase pepP (468 aa).

Mn(2+) contacts are provided by aspartate 265, aspartate 276, glutamate 399, and glutamate 439.

Belongs to the peptidase M24B family. It depends on Mn(2+) as a cofactor.

It catalyses the reaction Release of any N-terminal amino acid, including proline, that is linked to proline, even from a dipeptide or tripeptide.. Functionally, catalyzes the removal of a penultimate prolyl residue from the N-termini of peptides. This chain is Probable Xaa-Pro aminopeptidase pepP (pepP), found in Aspergillus fumigatus (strain CBS 144.89 / FGSC A1163 / CEA10) (Neosartorya fumigata).